The following is a 262-amino-acid chain: Acetylglutamate kinase (262 aa).

Substrate is bound by residues 48–49, arginine 70, and asparagine 162; that span reads GG.

This sequence belongs to the acetylglutamate kinase family. ArgB subfamily.

Its subcellular location is the cytoplasm. The enzyme catalyses N-acetyl-L-glutamate + ATP = N-acetyl-L-glutamyl 5-phosphate + ADP. It functions in the pathway amino-acid biosynthesis; L-arginine biosynthesis; N(2)-acetyl-L-ornithine from L-glutamate: step 2/4. In terms of biological role, catalyzes the ATP-dependent phosphorylation of N-acetyl-L-glutamate. This Vibrio cholerae serotype O1 (strain ATCC 39541 / Classical Ogawa 395 / O395) protein is Acetylglutamate kinase.